A 529-amino-acid chain; its full sequence is Peptide chain release factor 3 (529 aa).

Residues Ala11 to Met280 form the tr-type G domain. GTP-binding positions include Ser20–Thr27, Asp88–His92, and Asn142–Asp145.

The protein belongs to the TRAFAC class translation factor GTPase superfamily. Classic translation factor GTPase family. PrfC subfamily.

It is found in the cytoplasm. Increases the formation of ribosomal termination complexes and stimulates activities of RF-1 and RF-2. It binds guanine nucleotides and has strong preference for UGA stop codons. It may interact directly with the ribosome. The stimulation of RF-1 and RF-2 is significantly reduced by GTP and GDP, but not by GMP. The sequence is that of Peptide chain release factor 3 from Shigella boydii serotype 18 (strain CDC 3083-94 / BS512).